The chain runs to 617 residues: Putative type VI secretion system protein VgrGA (617 aa).

Disordered regions lie at residues 325–344 (GQQP…TLSN) and 449–469 (RTFH…TRTS).

Belongs to the VgrG protein family.

A Vgr protein that is probably part of a type VI secretion system (T6SS). May be required for export of proteins involved in Rhs-mediated cellular contact-dependent growth inhibition (CDI). The chain is Putative type VI secretion system protein VgrGA (vgrGA) from Dickeya dadantii (strain 3937) (Erwinia chrysanthemi (strain 3937)).